We begin with the raw amino-acid sequence, 1227 residues long: MTSNRKNENEIINALSIPAVSNHSAQMNLSTDARIEDSLCIAEGNNIDPFVSASTVQTGINIAGRILGVLGVPFAGQIASFYSFLVGELWPRGRDPWEIFLEHVEQLIRQQVTENTRDTALARLQGLGNSFRAYQQSLEDWLENRDDARTRSVLYTQYIALELDFLNAMPLFAIRNQEVPLLMVYAQAANLHLLLLRDASLFGSEFGLTSQEIQRYYERQVEKTREYSDYCARWYNTGLNNLRGTNAESWLRYNQFRRDLTLGVLDLVALFPSYDTRVYPMNTSAQLTREIYTDPIGRTNAPSGFASTNWFNNNAPSFSAIEAAVIRPPHLLDFPEQLTIFSVLSRWSNTQYMNYWVGHRLESRTIRGSLSTSTHGNTNTSINPVTLQFTSRDVYRTESFAGINILLTTPVNGVPWARFNWRNPLNSLRGSLLYTIGYTGVGTQLFDSETELPPETTERPNYESYSHRLSNIRLISGNTLRAPVYSWTHRSADRTNTISSDSITQIPLVKSFNLNSGTSVVSGPGFTGGDIIRTNVNGSVLSMGLNFNNTSLQRYRVRVRYAASQTMVLRVTVGGSTTFDQGFPSTMSANESLTSQSFRFAEFPVGISASGSQTAGISISNNAGRQTFHFDKIEFIPITATFEAEYDLERAQEAVNALFTNTNPRRLKTGVTDYHIDEVSNLVACLSDEFCLDEKRELLEKVKYAKRLSDERNLLQDPNFTSINKQPDFISTNEQSNFTSIHEQSEHGWWGSENITIQEGNDVFKENYVILPGTFNECYPTYLYQKIGEAELKAYTRYQLSGYIEDSQDLEIYLIRYNAKHETLDVPGTESVWPLSVESPIGRCGEPNRCAPHFEWNPDLDCSCRDGEKCAHHSHHFSLDIDVGCIDLHENLGVWVVFKIKTQEGHARLGNLEFIEEKPLLGEALSRVKRAEKKWRDKREKLQLETKRVYTEAKEAVDALFVDSQYDRLQADTNIGMIHAADKLVHRIREAYLSELSVIPGVNAEIFEELEGRIITAISLYDARNVVKNGDFNNGLACWNVKGHVDVQQSHHRSVLVIPEWEAEVSQAVRVCPGRGYILRVTAYKEGYGEGCVTIHEIENNTDELKFKNCEEEEVYPTDTGTCNDYTAHQGTAACNSRNAGYEDAYEVDTTASVNYKPTYEEETYTDVRRDNHCEYDRGYVNYPPVPAGYMTKELEYFPETDKVWIEIGETEGKFIVDSVELLLMEE.

Belongs to the delta endotoxin family.

Functionally, promotes colloidosmotic lysis by binding to the midgut epithelial cells of many lepidopteran larvae. This Bacillus thuringiensis protein is Pesticidal crystal protein Cry1Be (cry1Be).